A 342-amino-acid polypeptide reads, in one-letter code: N-acetyl-gamma-glutamyl-phosphate reductase (342 aa).

Cysteine 149 is a catalytic residue.

The protein belongs to the NAGSA dehydrogenase family. Type 1 subfamily.

The protein resides in the cytoplasm. It catalyses the reaction N-acetyl-L-glutamate 5-semialdehyde + phosphate + NADP(+) = N-acetyl-L-glutamyl 5-phosphate + NADPH + H(+). Its pathway is amino-acid biosynthesis; L-arginine biosynthesis; N(2)-acetyl-L-ornithine from L-glutamate: step 3/4. In terms of biological role, catalyzes the NADPH-dependent reduction of N-acetyl-5-glutamyl phosphate to yield N-acetyl-L-glutamate 5-semialdehyde. In Rhodobacter capsulatus (strain ATCC BAA-309 / NBRC 16581 / SB1003), this protein is N-acetyl-gamma-glutamyl-phosphate reductase.